Here is a 266-residue protein sequence, read N- to C-terminus: Undecaprenyl-diphosphatase 3 (266 aa).

Transmembrane regions (helical) follow at residues 4 to 24 (IEAF…FLPI), 43 to 63 (SGRA…CWLY), 86 to 106 (FSVL…VDFI), 109 to 129 (VLFS…IIFW), 145 to 165 (ITFK…IPGT), 186 to 206 (TEFS…YDLL), 219 to 239 (NIGL…KALV), and 246 to 266 (TLRV…FVML).

This sequence belongs to the UppP family.

The protein localises to the cell inner membrane. It catalyses the reaction di-trans,octa-cis-undecaprenyl diphosphate + H2O = di-trans,octa-cis-undecaprenyl phosphate + phosphate + H(+). Its function is as follows. Catalyzes the dephosphorylation of undecaprenyl diphosphate (UPP). Confers resistance to bacitracin. This Acinetobacter baylyi (strain ATCC 33305 / BD413 / ADP1) protein is Undecaprenyl-diphosphatase 3.